We begin with the raw amino-acid sequence, 2002 residues long: MEERKHETMNPAHVLFDRFVQATTCKGTLKAFQELCDHLELKPKDYRSFYHKLKSKLNYWKAKALWAKLDKRGSHKDYKKGKACTNTKCLIIGAGPCGLRTAIDLSLLGAKVVVIEKRDAFSRNNVLHLWPFTIHDLRGLGAKKFYGKFCAGAIDHISIRQLQLILLKVALILGIEIHVNVEFQGLIQPPEDQENERIGWRALVHPKTHPVSEYEFEVIIGGDGRRNTLEGFRRKEFRGKLAIAITANFINRNTTAEAKVEEISGVAFIFNQKFFQELREATGIDLENIVYYKDDTHYFVMTAKKQSLLDKGVILHDYADTELLLSRENVDQEALLSYAREAADFSTQQQLPSLDFAINHYGQPDVAMFDFTCMYASENAALVREQNGHQLLVALVGDSLLEPFWPMGTGIARGFLAAMDSAWMVRSWSLGTSPLEVLAERESIYRLLPQTTPENVSKNFSQYSIDPVTRYPNINVNFLRPSQVRHLYDTGETKDIHLEMESLVNSRTTPKLTRNESVARSSKLLGWCQRQTDGYAGVNVTDLTMSWKSGLALCAIIHRYRPDLIDFDSLDEQNVEKNNQLAFDIAEKELGISPIMTGKEMASVGEPDKLSMVMYLTQFYEMFKDSLPSSDTLDLNAEEKAVLIASTRSPISFLSKLGQTISRKRSPKDKKEKDLDGAGKRRKTSQSEEEEAPRGHRGERPTLVSTLTDRRMDVAVGNQNKVKYMATQLLAKFEENAPAQSIGIRRQGSMKKEFPQNLGGSDTCYFCQKRVYVMERLSAEGKFFHRSCFKCEYCATTLRLSAYAYDIEDGKFYCKPHYCYRLSGYAQRKRPAVAPLSGKEAKGPLQDGATTDANGRANAVASSTERTPGSGVNGLEEPSIAKRLRGTPERIELENYRLSLRQAEALQEVPEETQAEHNLSSVLDTGAEEDVASSSSESEMEEEGEEEEEEPRLPPSDLGGVPWKEAVRIHALLKGKSEEELEASKSFGPGNEEEEEEEEEYEEEEEEDYDEEEEESSEAGNQRLQQVMHAADPLEIQADVHWTHIREREEEERMAPASESSASGAPLDENDLEEDVDSEPAEIEGEAAEDGDPGDTGAELDDDQHWSDSPSDADRELRLPCPAEGEAELELRVSEDEEKLPASPKHQERGPSQATSPIRSPQESALLFIPVHSPSTEGPQLPPVPAATQEKSPEERLFPEPLLPKEKPKADAPSDLKAVHSPIRSQPVTLPEARTPVSPGSPQPQPPVAASTPPPSPLPICSQPQPSTEATVPSPTQSPIRFQPAPAKTSTPLAPLPVQSQSDTKDRLGSPLAVDEALRRSDLVEEFWMKSAEIRRSLGLTPVDRSKGPEPSFPTPAFRPVSLKSYSVEKSPQDEGLHLLKPLSIPKRLGLPKPEGEPLSLPTPRSPSDRELRSAQEERRELSSSSGLGLHGSSSNMKTLGSQSFNTSDSAMLTPPSSPPPPPPPGEEPATLRRKLREAEPNASVVPPPLPATWMRPPREPAQPPREEVRKSFVESVEEIPFADDVEDTYDDKTEDSSLQEKFFTPPSCWPRPEKPRHPPLAKENGRLPALEGTLQPQKRGLPLVSAEAKELAEERMRAREKSVKSQALRDAMARQLSRMQQMELASGAPRPRKASSAPSQGKERRPDSPTRPTLRGSEEPTLKHEATSEEVLSPPSDSGGPDGSFTSSEGSSGKSKKRSSLFSPRRNKKEKKSKGEGRPPEKPSSNLLEEAAAKPKSLWKSVFSGYKKDKKKKADDKSCPSTPSSGATVDSGKHRVLPVVRAELQLRRQLSFSEDSDLSSDDVLEKSSQKSRREPRTYTEEELNAKLTRRVQKAARRQAKQEELKRLHRAQIIQRQLQQVEERQRRLEERGVAVEKALRGEAGMGKKDDPKLMQEWFKLVQEKNAMVRYESELMIFARELELEDRQSRLQQELRERMAVEDHLKTEEELSEEKQILNEMLEVVEQRDSLVALLEEQRLREREEDKDLEAAMLSKGFSLNWS.

Residues 2–494 (EERKHETMNP…RHLYDTGETK (493 aa)) form a monooxygenase domain region. FAD is bound by residues Cys-97, 116–118 (EKR), 123–125 (RNN), Phe-183, Tyr-298, and Asp-398. The 107-residue stretch at 518-624 (VARSSKLLGW…YLTQFYEMFK (107 aa)) folds into the Calponin-homology (CH) domain. Ser-649 carries the post-translational modification Phosphoserine. Residues 658–706 (GQTISRKRSPKDKKEKDLDGAGKRRKTSQSEEEEAPRGHRGERPTLVST) are disordered. Positions 663 to 684 (RKRSPKDKKEKDLDGAGKRRKT) match the Nuclear localization signal motif. Residues 669–679 (DKKEKDLDGAG) are compositionally biased toward basic and acidic residues. Ser-685 and Ser-687 each carry phosphoserine. An LIM zinc-binding domain is found at 762–824 (DTCYFCQKRV…KPHYCYRLSG (63 aa)). 8 residues coordinate Zn(2+): Cys-764, Cys-767, His-785, Cys-788, Cys-791, Cys-794, Cys-814, and His-817. Positions 835–883 (PLSGKEAKGPLQDGATTDANGRANAVASSTERTPGSGVNGLEEPSIAKR) are disordered. The residue at position 887 (Thr-887) is a Phosphothreonine. Disordered stretches follow at residues 907 to 1313 (QEVP…SPLA), 1335 to 1776 (RRSL…GKHR), and 1791 to 1821 (LSFS…TYTE). Over residues 938 to 950 (SEMEEEGEEEEEE) the composition is skewed to acidic residues. At Ser-977 the chain carries Phosphoserine. The span at 991–1017 (NEEEEEEEEEYEEEEEEDYDEEEEESS) shows a compositional bias: acidic residues. Residues 1041 to 1054 (HWTHIREREEEERM) show a composition bias toward basic and acidic residues. Low complexity predominate over residues 1055 to 1066 (APASESSASGAP). Residues 1068 to 1102 (DENDLEEDVDSEPAEIEGEAAEDGDPGDTGAELDD) show a composition bias toward acidic residues. A phosphoserine mark is found at Ser-1134, Ser-1143, Ser-1160, and Ser-1192. Over residues 1150 to 1163 (GPSQATSPIRSPQE) the composition is skewed to polar residues. Basic and acidic residues predominate over residues 1191-1218 (KSPEERLFPEPLLPKEKPKADAPSDLKA). The span at 1239 to 1258 (PGSPQPQPPVAASTPPPSPL) shows a compositional bias: pro residues. 2 stretches are compositionally biased toward polar residues: residues 1268 to 1280 (TEAT…QSPI) and 1288 to 1302 (KTST…QSQS). The residue at position 1274 (Ser-1274) is a Phosphoserine. Thr-1276 is subject to Phosphothreonine. Ser-1278 carries the phosphoserine modification. Residues Ser-1310 and Ser-1337 each carry the phosphoserine modification. Thr-1341 carries the post-translational modification Phosphothreonine. 2 positions are modified to phosphoserine: Ser-1371 and Ser-1384. The span at 1407–1422 (PSDRELRSAQEERREL) shows a compositional bias: basic and acidic residues. Residues 1423 to 1435 (SSSSGLGLHGSSS) show a composition bias toward low complexity. Ser-1433 carries the post-translational modification Phosphoserine. A compositionally biased stretch (polar residues) spans 1436–1451 (NMKTLGSQSFNTSDSA). Thr-1454 is subject to Phosphothreonine. Residues 1456–1467 (PSSPPPPPPPGE) are compositionally biased toward pro residues. Positions 1516–1530 (SVEEIPFADDVEDTY) are enriched in acidic residues. A compositionally biased stretch (basic and acidic residues) spans 1588–1604 (EAKELAEERMRAREKSV). The residue at position 1649 (Ser-1649) is a Phosphoserine. Thr-1651 carries the post-translational modification Phosphothreonine. Residues 1657–1668 (GSEEPTLKHEAT) show a composition bias toward basic and acidic residues. The span at 1674 to 1694 (SPPSDSGGPDGSFTSSEGSSG) shows a compositional bias: low complexity. Residues 1695–1713 (KSKKRSSLFSPRRNKKEKK) are compositionally biased toward basic residues. Residues Ser-1701 and Ser-1704 each carry the phosphoserine modification. A compositionally biased stretch (polar residues) spans 1760 to 1769 (CPSTPSSGAT). A compositionally biased stretch (basic and acidic residues) spans 1804 to 1820 (VLEKSSQKSRREPRTYT). Residues 1821–1992 (EEELNAKLTR…EEDKDLEAAM (172 aa)) adopt a coiled-coil conformation. In terms of domain architecture, bMERB spans 1841-1990 (KQEELKRLHR…EREEDKDLEA (150 aa)). Ser-1912 bears the Phosphoserine mark.

Belongs to the Mical family. In terms of assembly, interacts with RAB1B, RAB8A, RAB10, RAB13 and RAB15 (in their GTP-bound forms); binding to RAB1B is of low affinity compared to other Rab proteins; at least in case of RAB8A can bind 2 molecules of RAB8A simultaneously through a high and a low affinity binding site, respectively. Interacts with ERC1 and RAB8A; may bridge ERC1 with RAB8A. Interacts with KIF23 and ERC1; enhances the interaction between KIF23 and ERC1. Interacts with NINL isoform 2. The cofactor is FAD. As to expression, ubiquitous.

It localises to the cytoplasm. The protein localises to the cell cortex. The protein resides in the cytoskeleton. It is found in the nucleus. Its subcellular location is the midbody. It localises to the spindle. The protein localises to the cilium basal body. It catalyses the reaction L-methionyl-[F-actin] + NADPH + O2 + H(+) = L-methionyl-(R)-S-oxide-[F-actin] + NADP(+) + H2O. In terms of biological role, monooxygenase that promotes depolymerization of F-actin by mediating oxidation of specific methionine residues on actin to form methionine-sulfoxide, resulting in actin filament disassembly and preventing repolymerization. In the absence of actin, it also functions as a NADPH oxidase producing H(2)O(2). Seems to act as Rab effector protein and plays a role in vesicle trafficking. Involved in exocytic vesicles tethering and fusion: the monooxygenase activity is required for this process and implicates RAB8A associated with exocytotic vesicles. Required for cytokinesis. Contributes to stabilization and/or maturation of the intercellular bridge independently of its monooxygenase activity. Promotes recruitment of Rab8 and ERC1 to the intercellular bridge, and together these proteins are proposed to function in timely abscission. In Homo sapiens (Human), this protein is [F-actin]-monooxygenase MICAL3 (MICAL3).